We begin with the raw amino-acid sequence, 408 residues long: Na(+)/H(+) antiporter NhaA (408 aa).

The next 12 helical transmembrane spans lie at 42 to 62, 69 to 89, 110 to 130, 140 to 160, 169 to 189, 192 to 212, 215 to 235, 238 to 258, 277 to 297, 312 to 332, 346 to 366, and 380 to 400; these read LMFVAALALLLANSPFAPVYF, VLGLTVLHWINDALMAVFFLL, ALPGIAALGGMVVPAVIFIAV, GWAIPSATDIAFALGVLSLLG, IFLTALAILDDLGAVLIIALF, AELTPLMLILAAATLLGLAAL, FGVKPLAPYLVLGVVLWFFVL, GIHATLAGVALALAIPLQAST, VAFLIVPVFGFANAGVSFAGL, LGLFFGKQVGVFGFAWLAIWL, LYGVAVLCGIGFTMSLFIGLL, and IGVLLGSTLAGLIGWLILRVT.

This sequence belongs to the NhaA Na(+)/H(+) (TC 2.A.33) antiporter family.

Its subcellular location is the cell inner membrane. It carries out the reaction Na(+)(in) + 2 H(+)(out) = Na(+)(out) + 2 H(+)(in). In terms of biological role, na(+)/H(+) antiporter that extrudes sodium in exchange for external protons. The polypeptide is Na(+)/H(+) antiporter NhaA (Nitrobacter hamburgensis (strain DSM 10229 / NCIMB 13809 / X14)).